A 123-amino-acid chain; its full sequence is Fluoride-specific ion channel FluC (123 aa).

Helical transmembrane passes span Val7–Leu27, Leu39–Ile59, Phe68–Phe88, and Ala100–Leu120. Gly75 and Ser78 together coordinate Na(+).

It belongs to the fluoride channel Fluc/FEX (TC 1.A.43) family.

It is found in the cell membrane. The catalysed reaction is fluoride(in) = fluoride(out). With respect to regulation, na(+) is not transported, but it plays an essential structural role and its presence is essential for fluoride channel function. Functionally, fluoride-specific ion channel. Important for reducing fluoride concentration in the cell, thus reducing its toxicity. The protein is Fluoride-specific ion channel FluC of Thermococcus onnurineus (strain NA1).